A 226-amino-acid chain; its full sequence is Ribonuclease 3 (226 aa).

Residues 6–128 (INRLQRKLGY…LIGGVFLDSD (123 aa)) form the RNase III domain. Glutamate 41 serves as a coordination point for Mg(2+). Residue aspartate 45 is part of the active site. Residues aspartate 114 and glutamate 117 each contribute to the Mg(2+) site. Glutamate 117 is a catalytic residue. The DRBM domain occupies 155–225 (DPKTRLQEYL…AEQALKKLEL (71 aa)).

It belongs to the ribonuclease III family. As to quaternary structure, homodimer. Mg(2+) serves as cofactor.

Its subcellular location is the cytoplasm. It catalyses the reaction Endonucleolytic cleavage to 5'-phosphomonoester.. Functionally, digests double-stranded RNA. Involved in the processing of primary rRNA transcript to yield the immediate precursors to the large and small rRNAs (23S and 16S). Processes some mRNAs, and tRNAs when they are encoded in the rRNA operon. Processes pre-crRNA and tracrRNA of type II CRISPR loci if present in the organism. This Escherichia coli O139:H28 (strain E24377A / ETEC) protein is Ribonuclease 3.